Reading from the N-terminus, the 108-residue chain is UPF0145 protein Ava_0420 (108 aa).

This sequence belongs to the UPF0145 family.

This is UPF0145 protein Ava_0420 from Trichormus variabilis (strain ATCC 29413 / PCC 7937) (Anabaena variabilis).